The sequence spans 390 residues: MTTTPTMTQKLPQALPTASIDLDAIAHNVAVLREHAGPAAVMAVVKADGYGHGATQVARAALAAGAAELGVATVGEALALRRDGVTARVLAWLHPPGTDFAPALLADVDVAVSSLRQFTDLLDAAGRTGRTADVTVKADTGLSRNGVGEADYPALVDALRRAASDGAVRVRGLMSHLAHGDDPEHPFNDVQARRLTEMAKLAGARGVSYDVVHLSNSPAALTRPDLAFDMVRPGIAVYGQTPIPQRGDFGLRPAMTVKCPVSAVRPVRAGDAVSYGHTWTAQTDTTLALVPAGYADGVFRALSNRFEVSINGRRYPNVGRICMDQFVVDLGPGPVDVAEGDDAILFGPGTDGEPTAQDWAELLDTINYEVVTSPRGRIVRTYVGGKGGPQ.

Lys-46 (proton acceptor; specific for D-alanine) is an active-site residue. Lys-46 carries the post-translational modification N6-(pyridoxal phosphate)lysine. Arg-144 serves as a coordination point for substrate. The Proton acceptor; specific for L-alanine role is filled by Tyr-275. Residue Met-323 participates in substrate binding.

The protein belongs to the alanine racemase family. The cofactor is pyridoxal 5'-phosphate.

The enzyme catalyses L-alanine = D-alanine. It functions in the pathway amino-acid biosynthesis; D-alanine biosynthesis; D-alanine from L-alanine: step 1/1. Catalyzes the interconversion of L-alanine and D-alanine. May also act on other amino acids. In Mycolicibacterium vanbaalenii (strain DSM 7251 / JCM 13017 / BCRC 16820 / KCTC 9966 / NRRL B-24157 / PYR-1) (Mycobacterium vanbaalenii), this protein is Alanine racemase (alr).